A 638-amino-acid polypeptide reads, in one-letter code: Chaperone protein DnaK (638 aa).

Thr198 is modified (phosphothreonine; by autocatalysis). Disordered stretches follow at residues 539-559 and 602-638; these read DGLA…LASD and QAKA…DDKK. The span at 611-623 shows a compositional bias: basic and acidic residues; that stretch reads GQAHDAGQEKPAD. Residues 624-638 show a composition bias toward acidic residues; that stretch reads DVVDAEFEEVKDDKK.

The protein belongs to the heat shock protein 70 family.

In terms of biological role, acts as a chaperone. This chain is Chaperone protein DnaK, found in Shewanella frigidimarina (strain NCIMB 400).